We begin with the raw amino-acid sequence, 83 residues long: MSGTKKVGSAGRFGARYGLKIRRRVAAVEAKMRQKHVCPVCGRRAVKRISTGIWQCTKCGAIFAGGAYLPVTPAGKVARRIME.

Cys38, Cys41, Cys56, and Cys59 together coordinate Zn(2+). Residues 38–59 form a C4-type zinc finger; that stretch reads CPVCGRRAVKRISTGIWQCTKC.

Belongs to the eukaryotic ribosomal protein eL43 family. Putative zinc-binding subfamily. In terms of assembly, part of the 50S ribosomal subunit. It depends on Zn(2+) as a cofactor.

Its function is as follows. Binds to the 23S rRNA. The protein is Large ribosomal subunit protein eL43 of Pyrococcus horikoshii (strain ATCC 700860 / DSM 12428 / JCM 9974 / NBRC 100139 / OT-3).